A 213-amino-acid chain; its full sequence is Phosphate-specific transport system accessory protein PhoU homolog 2 (213 aa).

This sequence belongs to the PhoU family. As to quaternary structure, homodimer.

Its subcellular location is the cytoplasm. In terms of biological role, plays a role in the regulation of phosphate uptake. In this role, it may bind, possibly as a chaperone, to PhoR, PhoP or a PhoR-PhoP complex to promote dephosphorylation of phospho-PhoP, or inhibit formation of the PhoR-PhoP transitory complex. The protein is Phosphate-specific transport system accessory protein PhoU homolog 2 (phoU2) of Mycobacterium bovis (strain ATCC BAA-935 / AF2122/97).